Consider the following 64-residue polypeptide: Putative neurotoxin-G (64 aa).

The N-terminal stretch at 1–19 is a signal peptide; the sequence is MFAMVTVTVLLLISSGIFC. 3 disulfide bridges follow: Cys25–Cys45, Cys32–Cys54, and Cys36–Cys56.

Expressed by the venom gland.

The protein localises to the secreted. In Lychas mucronatus (Chinese swimming scorpion), this protein is Putative neurotoxin-G.